The following is a 423-amino-acid chain: Diaminobutyrate--2-oxoglutarate transaminase (423 aa).

N6-(pyridoxal phosphate)lysine is present on Lys271.

It belongs to the class-III pyridoxal-phosphate-dependent aminotransferase family. Requires pyridoxal 5'-phosphate as cofactor.

The catalysed reaction is L-2,4-diaminobutanoate + 2-oxoglutarate = L-aspartate 4-semialdehyde + L-glutamate. The protein operates within amine and polyamine biosynthesis; ectoine biosynthesis; L-ectoine from L-aspartate 4-semialdehyde: step 1/3. Its function is as follows. Catalyzes reversively the conversion of L-aspartate beta-semialdehyde (ASA) to L-2,4-diaminobutyrate (DABA) by transamination with L-glutamate. This chain is Diaminobutyrate--2-oxoglutarate transaminase (ectB), found in Streptomyces coelicolor (strain ATCC BAA-471 / A3(2) / M145).